Here is a 507-residue protein sequence, read N- to C-terminus: MTKSEQQADSRHNVIDLVGNTPLIALKKLPKALGIKPQIYAKLELYNPGGSIKDRIAKSMVEEAEASGRIHPSRSTLIEPTSGNTGIGLALIGAIKGYRTIITLPEKMSNEKVSVLKALGAEIIRTPTAAAWDSPESHIGVAKKLEKEIPGAVILDQYNNMMNPEAHYFGTGREIQRQLEDLNLFDNLRAVVAGAGTGGTISGISKYLKEQNDKIQIVGADPFGSILAQPENLNKTDITDYKVEGIGYDFVPQVLDRKLIDVWYKTDDKPSFKYARQLISNEGVLVGGSSGSAFTAVVKYCEDHPELTEDDVIVAIFPDSIRSYLTKFVDDEWLKKNNLWDDDVLARFDSSKLEASTTKYADVFGNATVKDLHLKPVVSVKETAKVTDVIKILKDNGFDQLPVLTEDGKLSGLVTLSELLRKLSINNSNNDNTIKGKYLDFKKLNNFNDVSSYNENKSGKKKFIKFDENSKLSDLNRFFEKNSSAVITDGLKPIHIVTKMDLLSYLA.

Lys53 bears the N6-(pyridoxal phosphate)lysine mark. Residue Asn84 coordinates pyridoxal 5'-phosphate. At Ser134 the chain carries Phosphoserine. Residues 196–200 (GTGGT) and Ser289 contribute to the pyridoxal 5'-phosphate site. Phosphoserine occurs at positions 350 and 424. One can recognise a CBS domain in the interval 373–432 (HLKPVVSVKETAKVTDVIKILKDNGFDQLPVLTEDGKLSGLVTLSELLRKLSINNSNNDN).

This sequence belongs to the cysteine synthase/cystathionine beta-synthase family. Requires pyridoxal 5'-phosphate as cofactor.

The catalysed reaction is L-homocysteine + L-serine = L,L-cystathionine + H2O. It participates in amino-acid biosynthesis; L-cysteine biosynthesis; L-cysteine from L-homocysteine and L-serine: step 1/2. This is Cystathionine beta-synthase (CYS4) from Saccharomyces cerevisiae (strain ATCC 204508 / S288c) (Baker's yeast).